Here is a 381-residue protein sequence, read N- to C-terminus: Succinyl-diaminopimelate desuccinylase (381 aa).

A Zn(2+)-binding site is contributed by histidine 72. Aspartate 74 is a catalytic residue. Aspartate 105 is a Zn(2+) binding site. Glutamate 139 functions as the Proton acceptor in the catalytic mechanism. The Zn(2+) site is built by glutamate 140, glutamate 168, and histidine 354.

Belongs to the peptidase M20A family. DapE subfamily. Homodimer. Zn(2+) serves as cofactor. The cofactor is Co(2+).

The catalysed reaction is N-succinyl-(2S,6S)-2,6-diaminopimelate + H2O = (2S,6S)-2,6-diaminopimelate + succinate. Its pathway is amino-acid biosynthesis; L-lysine biosynthesis via DAP pathway; LL-2,6-diaminopimelate from (S)-tetrahydrodipicolinate (succinylase route): step 3/3. Its function is as follows. Catalyzes the hydrolysis of N-succinyl-L,L-diaminopimelic acid (SDAP), forming succinate and LL-2,6-diaminopimelate (DAP), an intermediate involved in the bacterial biosynthesis of lysine and meso-diaminopimelic acid, an essential component of bacterial cell walls. This is Succinyl-diaminopimelate desuccinylase from Shewanella sp. (strain ANA-3).